We begin with the raw amino-acid sequence, 516 residues long: uncharacterized protein (516 aa).

Ser21 bears the Phosphoserine mark. The tract at residues 46–74 is disordered; sequence DLQSSMEDSNKANGNGEETTDGAEGVLQT. Residues 47–62 show a composition bias toward polar residues; it reads LQSSMEDSNKANGNGE. WD repeat units follow at residues 182–227, 252–292, 295–335, 337–377, 381–421, and 426–468; these read TFPL…AVYP, YHTD…CVKS, YHSD…APSS, QVTS…KSVW, AHDG…PKMV, and LDVG…GVRK. Positions 482–493 are enriched in basic and acidic residues; the sequence is ERIVQLEDRGAG. The interval 482-516 is disordered; sequence ERIVQLEDRGAGEDSSDDDDYEDIEDDDDQDAEMS. Residues 495-516 show a composition bias toward acidic residues; the sequence is DSSDDDDYEDIEDDDDQDAEMS. Residues Ser496 and Ser497 each carry the phosphoserine modification.

The protein resides in the cytoplasm. It localises to the nucleus. It is found in the nucleolus. This is an uncharacterized protein from Schizosaccharomyces pombe (strain 972 / ATCC 24843) (Fission yeast).